A 218-amino-acid polypeptide reads, in one-letter code: Uracil-DNA glycosylase (218 aa).

Belongs to the uracil-DNA glycosylase (UDG) superfamily. UNG family. As to quaternary structure, homodimer. Interacts with protein OPG148. Component of the Uracil-DNA glycosylase(UDG)-OPG148-polymerase complex; OPG148 and UDG form a heterodimeric processivity factor that associates with OPG71 to form the processive polymerase holoenzyme.

It carries out the reaction Hydrolyzes single-stranded DNA or mismatched double-stranded DNA and polynucleotides, releasing free uracil.. Its function is as follows. Plays an essential role in viral replication as a component of the DNA polymerase processivity factor. Excises uracil residues from the DNA which can arise as a result of misincorporation of dUMP residues by DNA polymerase or due to deamination of cytosine. The chain is Uracil-DNA glycosylase (OPG116) from Monkeypox virus.